The chain runs to 366 residues: Ribosomal RNA large subunit methyltransferase M (366 aa).

S-adenosyl-L-methionine contacts are provided by residues Ser-188, Cys-221–Gly-224, Asp-240, Asp-260, and Asp-277. Lys-306 (proton acceptor) is an active-site residue.

This sequence belongs to the class I-like SAM-binding methyltransferase superfamily. RNA methyltransferase RlmE family. RlmM subfamily. As to quaternary structure, monomer.

The protein resides in the cytoplasm. The catalysed reaction is cytidine(2498) in 23S rRNA + S-adenosyl-L-methionine = 2'-O-methylcytidine(2498) in 23S rRNA + S-adenosyl-L-homocysteine + H(+). Catalyzes the 2'-O-methylation at nucleotide C2498 in 23S rRNA. The sequence is that of Ribosomal RNA large subunit methyltransferase M from Photorhabdus asymbiotica subsp. asymbiotica (strain ATCC 43949 / 3105-77) (Xenorhabdus luminescens (strain 2)).